The following is a 245-amino-acid chain: Syntaxin-61 (245 aa).

Residues M1–Q224 lie on the Cytoplasmic side of the membrane. In terms of domain architecture, t-SNARE coiled-coil homology spans M153–V215. Residues M225–T245 form a helical; Anchor for type IV membrane protein membrane-spanning segment.

It belongs to the syntaxin family. As to quaternary structure, interacts with VTI12 and either SYP41, SYP42 or SYP51 in the trans-Golgi network or with VTI11 and SYP51 in the prevacuolar compartment to form t-SNARE complexes. Core constituent of the SNARE complex required for membrane fusion at the trans-Golgi network. Also observed in the SYP121-complex and cellulose synthases. Colocalizes with PIP2-7 and SYP121 in trafficking vesicles and at the plasma membrane. Interacts with SYP121 and PIP2-7. Expressed in root, leaf, stem, flower and silique, but not in hypocotyl or young leaf. Strong expression in the vasculature and in guard cells of the leaf epidermis.

Its subcellular location is the golgi apparatus. It localises to the trans-Golgi network membrane. It is found in the prevacuolar compartment membrane. Functionally, vesicle trafficking protein that functions in the secretory pathway; the fusion of phospholipid vesicles containing SYP61 and VTI12 is triggered by YKT61 and YKT62. Together with VTI12, required for membrane fusion. Involved in osmotic stress tolerance and in abscisic acid (ABA) regulation of stomatal responses. Plays a role in the exocytic trafficking of cellulose synthases (CESAs) and the transport of cell wall components to the plasma membrane. Together with SYP121, regulates the post-Golgi trafficking of the aquaporin PIP2-7 to the plasma membrane, thus modulating cell membrane water permeability. The polypeptide is Syntaxin-61 (Arabidopsis thaliana (Mouse-ear cress)).